A 160-amino-acid polypeptide reads, in one-letter code: MSTLKKPDLSDPKLRAKLAKGMGHNYYGEPAWPNDLLYIFPVVILGTIACVVGLAVLDPAMLGDKANPFATPLEILPEWYLYPVFQILRVVPNKLLGIALQTLIPLGLMILPFIENVNKFSNPFRRPIAMSVFLFGTFLTIYLGIGACLPIDKSLTLGLF.

Helical transmembrane passes span 36-56 (LLYI…GLAV), 95-115 (LLGI…PFIE), and 128-148 (IAMS…IGAC).

This sequence belongs to the cytochrome b family. PetD subfamily. The 4 large subunits of the cytochrome b6-f complex are cytochrome b6, subunit IV (17 kDa polypeptide, PetD), cytochrome f and the Rieske protein, while the 4 small subunits are PetG, PetL, PetM and PetN. The complex functions as a dimer.

It is found in the cellular thylakoid membrane. Its function is as follows. Component of the cytochrome b6-f complex, which mediates electron transfer between photosystem II (PSII) and photosystem I (PSI), cyclic electron flow around PSI, and state transitions. This Prochlorococcus marinus (strain MIT 9301) protein is Cytochrome b6-f complex subunit 4.